The primary structure comprises 327 residues: Apoptosis facilitator Bcl-2-like protein 14 (327 aa).

Position 44 is a phosphoserine (Ser44). Positions 212–226 (IVELLKYSGDQLERK) match the BH3 motif. The short motif at 308–315 (WIQQHGGW) is the BH2 element.

This sequence belongs to the Bcl-2 family. Post-translationally, phosphorylated by MELK, leading to inhibit its pro-apoptotic function. Isoform 1 is widely expressed. Isoform 2 is testis-specific.

The protein localises to the cytoplasm. The protein resides in the cytosol. It localises to the endomembrane system. In terms of biological role, plays a role in apoptosis. The sequence is that of Apoptosis facilitator Bcl-2-like protein 14 (BCL2L14) from Homo sapiens (Human).